The primary structure comprises 92 residues: Small ribosomal subunit protein uS19 (92 aa).

The protein belongs to the universal ribosomal protein uS19 family.

Protein S19 forms a complex with S13 that binds strongly to the 16S ribosomal RNA. The chain is Small ribosomal subunit protein uS19 from Sinorhizobium medicae (strain WSM419) (Ensifer medicae).